An 884-amino-acid chain; its full sequence is Probable disease resistance protein At1g12290 (884 aa).

Residues 26 to 66 are a coiled coil; it reads LYYIQNIKENLTSLEEAMEDLKALRDDLLRKVQTAEEGGLQ. Residues 139–443 enclose the NB-ARC domain; that stretch reads AHPATRAVGE…CEGFIDGDEN (305 aa). Residue 182–189 participates in ATP binding; that stretch reads GMGGVGKT. 6 LRR repeats span residues 519 to 540, 541 to 563, 566 to 588, 590 to 612, 613 to 635, and 644 to 664; these read VVSRMSLVNNRIKEIHGSPECP, KLTTLFLQDNRHLVNISGEFFRS, RLVVLDLSWNVNLSGLPDQISEL, SLRYLDLSYSSIGRLPVGLLKLK, KLMHLNLESMLCLESVSGIDHLS, and NLRMWLTISLLEELERLENLE.

It belongs to the disease resistance NB-LRR family.

Probable disease resistance protein. This is Probable disease resistance protein At1g12290 from Arabidopsis thaliana (Mouse-ear cress).